We begin with the raw amino-acid sequence, 249 residues long: Triosephosphate isomerase (249 aa).

A substrate-binding site is contributed by 9-11; the sequence is NWK. The active-site Electrophile is the H95. E167 (proton acceptor) is an active-site residue. Substrate contacts are provided by residues G173, S213, and 234–235; that span reads GG.

It belongs to the triosephosphate isomerase family. As to quaternary structure, homodimer.

It is found in the cytoplasm. The catalysed reaction is D-glyceraldehyde 3-phosphate = dihydroxyacetone phosphate. The protein operates within carbohydrate biosynthesis; gluconeogenesis. It functions in the pathway carbohydrate degradation; glycolysis; D-glyceraldehyde 3-phosphate from glycerone phosphate: step 1/1. Involved in the gluconeogenesis. Catalyzes stereospecifically the conversion of dihydroxyacetone phosphate (DHAP) to D-glyceraldehyde-3-phosphate (G3P). The polypeptide is Triosephosphate isomerase (Solibacter usitatus (strain Ellin6076)).